A 638-amino-acid polypeptide reads, in one-letter code: Sodium- and chloride-dependent glycine transporter 1 (638 aa).

Residues 1-30 (MAVAHGPVATSSPEQNGAVPSEATKKDQNL) are disordered. At 1–40 (MAVAHGPVATSSPEQNGAVPSEATKKDQNLTRGNWGNQIE) the chain is on the cytoplasmic side. The next 3 membrane-spanning stretches (helical) occupy residues 41 to 61 (FVLT…FPYL), 68 to 88 (GAFM…LFFM), and 120 to 140 (VSTY…YYFF). At 141–217 (SSMTHVLPWA…LSDDIGDFGE (77 aa)) the chain is on the extracellular side. Residues Asn169, Asn172, Asn182, and Asn188 are each glycosylated (N-linked (GlcNAc...) asparagine). Transmembrane regions (helical) follow at residues 218–238 (VRLP…LCLI), 247–267 (VVYF…VRGV), 292–312 (VWGD…GGLI), 339–359 (SVYA…HLGV), 382–402 (LLPI…LLGL), 438–458 (VAGF…WLLL), 462–482 (YAAS…IMYI), 502–522 (LFFQ…ILIF), and 542–562 (VAIG…YALF). The Cytoplasmic segment spans residues 563–638 (QLCRTDGDTL…GSSRLQDSRI (76 aa)). Thr603 bears the Phosphothreonine mark. Phosphoserine is present on residues Ser605 and Ser630. The essential for interaction with EXOC1 stretch occupies residues 627 to 638 (SNGSSRLQDSRI).

The protein belongs to the sodium:neurotransmitter symporter (SNF) (TC 2.A.22) family. SLC6A9 subfamily. As to quaternary structure, interacts with EXOC1; interaction increases the transporter capacity of SLC6A9 probably by promoting its insertion into the cell membrane. Interacts with EXOC3 and EXOC4. Found only in the white matter of the CNS. In terms of tissue distribution, found in the gray matter of CNS as well as in macrophages and mast cells in peripheral tissues.

It is found in the cell membrane. The enzyme catalyses glycine(out) + chloride(out) + 2 Na(+)(out) = glycine(in) + chloride(in) + 2 Na(+)(in). With respect to regulation, inhibited by sarcosine. Functionally, sodium- and chloride-dependent glycine transporter. Essential for regulating glycine concentrations at inhibitory glycinergic synapses. The protein is Sodium- and chloride-dependent glycine transporter 1 (Slc6a9) of Rattus norvegicus (Rat).